Consider the following 447-residue polypeptide: Probable glycine dehydrogenase (decarboxylating) subunit 1 (447 aa).

Belongs to the GcvP family. N-terminal subunit subfamily. In terms of assembly, the glycine cleavage system is composed of four proteins: P, T, L and H. In this organism, the P 'protein' is a heterodimer of two subunits.

The catalysed reaction is N(6)-[(R)-lipoyl]-L-lysyl-[glycine-cleavage complex H protein] + glycine + H(+) = N(6)-[(R)-S(8)-aminomethyldihydrolipoyl]-L-lysyl-[glycine-cleavage complex H protein] + CO2. The glycine cleavage system catalyzes the degradation of glycine. The P protein binds the alpha-amino group of glycine through its pyridoxal phosphate cofactor; CO(2) is released and the remaining methylamine moiety is then transferred to the lipoamide cofactor of the H protein. In Metallosphaera sedula (strain ATCC 51363 / DSM 5348 / JCM 9185 / NBRC 15509 / TH2), this protein is Probable glycine dehydrogenase (decarboxylating) subunit 1.